The following is a 682-amino-acid chain: Methionine--tRNA ligase (682 aa).

A 'HIGH' region motif is present at residues 15–25; sequence PYANGAIHLGH. Zn(2+) is bound by residues Cys146, Cys149, Cys159, and Cys162. Residues 331–335 carry the 'KMSKS' region motif; it reads KMSKS. Lys334 provides a ligand contact to ATP. One can recognise a tRNA-binding domain in the interval 580–682; it reads DLAKLDMRVA…NGVTAGMQVK (103 aa).

The protein belongs to the class-I aminoacyl-tRNA synthetase family. MetG type 1 subfamily. As to quaternary structure, homodimer. It depends on Zn(2+) as a cofactor.

The protein localises to the cytoplasm. The catalysed reaction is tRNA(Met) + L-methionine + ATP = L-methionyl-tRNA(Met) + AMP + diphosphate. Its function is as follows. Is required not only for elongation of protein synthesis but also for the initiation of all mRNA translation through initiator tRNA(fMet) aminoacylation. The chain is Methionine--tRNA ligase from Haemophilus influenzae (strain 86-028NP).